The following is an 83-amino-acid chain: EAPANAVTMDDPTAQALKYHPSAADSDRVAAARPGLPPEEQHCANCNFMQADVGEGDYKGCQLFPGKLINVNGWCASWTLKAG.

Positions 43, 46, 61, and 75 each coordinate [4Fe-4S] cluster.

It belongs to the high-potential iron-sulfur protein (HiPIP) family. As to quaternary structure, homodimer.

The protein localises to the periplasm. Functionally, specific class of high-redox-potential 4Fe-4S ferredoxins. Functions in anaerobic electron transport in most purple and in some other photosynthetic bacteria and in at least one genus (Paracoccus) of halophilic, denitrifying bacteria. This Thiocystis violacea protein is High-potential iron-sulfur protein.